A 520-amino-acid polypeptide reads, in one-letter code: Cobyric acid synthase (520 aa).

Positions 254–465 constitute a GATase cobBQ-type domain; that stretch reads ELDIAVVRLP…IHGILDNDGL (212 aa). The active-site Nucleophile is C335. H457 is an active-site residue.

The protein belongs to the CobB/CobQ family. CobQ subfamily.

The protein operates within cofactor biosynthesis; adenosylcobalamin biosynthesis. In terms of biological role, catalyzes amidations at positions B, D, E, and G on adenosylcobyrinic A,C-diamide. NH(2) groups are provided by glutamine, and one molecule of ATP is hydrogenolyzed for each amidation. The polypeptide is Cobyric acid synthase (Sorangium cellulosum (strain So ce56) (Polyangium cellulosum (strain So ce56))).